Reading from the N-terminus, the 430-residue chain is Synaptotagmin-11 (430 aa).

Residues 1–15 (MAEITNIRPSFDVSP) lie on the Vesicular side of the membrane. Residues 16-36 (VAAGLIGASVLVVCVSVTVFV) form a helical membrane-spanning segment. The Cytoplasmic portion of the chain corresponds to 37 to 430 (WTCCHQQAEK…IAKWHSLSEY (394 aa)). Positions 79–90 (RRDKDGPRRESG) are enriched in basic and acidic residues. 2 disordered regions span residues 79–120 (RRDK…CMDQ) and 132–152 (RSPMTSLTPGESKATSPSSPE). Position 133 is a phosphoserine (S133). A compositionally biased stretch (polar residues) spans 134 to 150 (PMTSLTPGESKATSPSS). C2 domains lie at 156–278 (MLGS…QLTR) and 290–425 (SRGE…AKWH). 3 residues coordinate Ca(2+): D249, S252, and D255.

Belongs to the synaptotagmin family. In terms of assembly, homodimer. Can also form heterodimers. Interacts with PRKN. Interacts (via C2 2 domain) with AGO2 and SND1; the interaction with SND1 is direct. Interacts with KIF1A; the interaction increases in presence of calcium. Ca(2+) is required as a cofactor. Post-translationally, ubiquitinated, at least by PRKN, and targeted to the proteasome complex for degradation. Ubiquitination is inhibited by ATP13A2. As to expression, expressed in cerebellun, cerebellar cortex, hippocampus, olfactory bulb and spinal cord (at protein level). Expressed by neurons, astrocytes and microglia (at protein level). Expressed in macrophages (at protein level).

It is found in the cytoplasmic vesicle membrane. The protein localises to the perikaryon. It localises to the golgi apparatus. Its subcellular location is the trans-Golgi network membrane. The protein resides in the recycling endosome membrane. It is found in the lysosome membrane. The protein localises to the cytoplasmic vesicle. It localises to the phagosome. Its subcellular location is the cell projection. The protein resides in the axon. It is found in the dendrite. The protein localises to the postsynaptic density. It localises to the clathrin-coated vesicle membrane. Its function is as follows. Synaptotagmin family member involved in vesicular and membrane trafficking which does not bind Ca(2+). Inhibits clathrin-mediated and bulk endocytosis, functions to ensure precision in vesicle retrieval. Plays an important role in dopamine transmission by regulating endocytosis and the vesicle-recycling process. Essential component of a neuronal vesicular trafficking pathway that differs from the synaptic vesicle trafficking pathway but is crucial for development and synaptic plasticity. In macrophages and microglia, inhibits the conventional cytokine secretion, of at least IL6 and TNF, and phagocytosis. In astrocytes, regulates lysosome exocytosis, mechanism required for the repair of injured astrocyte cell membrane. Required for the ATP13A2-mediated regulation of the autophagy-lysosome pathway. In Mus musculus (Mouse), this protein is Synaptotagmin-11.